The chain runs to 576 residues: 4-alpha-glucanotransferase, chloroplastic/amyloplastic (576 aa).

A chloroplast-targeting transit peptide spans 1 to 52; the sequence is MAIHTCFSLIPSSFSSPKLPYPKNTTFQSPIPKLSRPTFMFDRKGSFQNGTA.

The protein belongs to the disproportionating enzyme family. Present in leaves, stems, roots, and stolons but is most abundant in developing and mature tubers.

It localises to the plastid. Its subcellular location is the chloroplast. The protein resides in the amyloplast. It carries out the reaction Transfers a segment of a (1-&gt;4)-alpha-D-glucan to a new position in an acceptor, which may be glucose or a (1-&gt;4)-alpha-D-glucan.. In terms of biological role, may act during starch breakdown to convert small oligosaccharides into larger molecules upon which starch phosphorylase can act, or may change the structure of starch molecules and grain architecture by modifying chain length, or may generate from starch and glucose oligosaccharides which can serve either as primers for new starch phosphoenzyme. This chain is 4-alpha-glucanotransferase, chloroplastic/amyloplastic (DPEP), found in Solanum tuberosum (Potato).